The following is a 394-amino-acid chain: Anhydro-N-acetylmuramic acid kinase (394 aa).

Residue 11–18 (GTSADGID) coordinates ATP.

The protein belongs to the anhydro-N-acetylmuramic acid kinase family.

The enzyme catalyses 1,6-anhydro-N-acetyl-beta-muramate + ATP + H2O = N-acetyl-D-muramate 6-phosphate + ADP + H(+). It functions in the pathway amino-sugar metabolism; 1,6-anhydro-N-acetylmuramate degradation. The protein operates within cell wall biogenesis; peptidoglycan recycling. Functionally, catalyzes the specific phosphorylation of 1,6-anhydro-N-acetylmuramic acid (anhMurNAc) with the simultaneous cleavage of the 1,6-anhydro ring, generating MurNAc-6-P. Is required for the utilization of anhMurNAc either imported from the medium or derived from its own cell wall murein, and thus plays a role in cell wall recycling. The polypeptide is Anhydro-N-acetylmuramic acid kinase (Deinococcus geothermalis (strain DSM 11300 / CIP 105573 / AG-3a)).